The following is a 609-amino-acid chain: MKWVESIFLIFLLNFTESRTLHRNEYGIASILDSYQCTAEISLADLATIFFAQFVQEATYKEVSKMVKDALTAIEKPTGDEQSAGCLENQLPAFLEELCHEKEILEKYGLSDCCSQSEEGRHNCFLAHKKPTPASIPLFQVPEPVTSCEAYEEDRETFMNKFIYEIARRHPFLYAPTILLWAARYDKIIPSCCKAENAVECFQTKAATVTKELRESSLLNQHACAVMKNFGTRTFQAITVTKLSQKFTKVNFTEIQKLVLDVAHVHEHCCRGDVLDCLQDGEKIMSYICSQQDTLSNKITECCKLTTLERGQCIIHAENDEKPEGLSPNLNRFLGDRDFNQFSSGEKNIFLASFVHEYSRRHPQLAVSVILRVAKGYQELLEKCFQTENPLECQDKGEEELQKYIQESQALAKRSCGLFQKLGEYYLQNAFLVAYTKKAPQLTSSELMAITRKMAATAATCCQLSEDKLLACGEGAADIIIGHLCIRHEMTPVNPGVGQCCTSSYANRRPCFSSLVVDETYVPPAFSDDKFIFHKDLCQAQGVALQTMKQEFLINLVKQKPQITEEQLETVIADFSGLLEKCCQGQEQEVCFAEEGQKLISKTRTALGV.

An N-terminal signal peptide occupies residues 1 to 18; the sequence is MKWVESIFLIFLLNFTES. Albumin domains follow at residues 19-210, 211-402, and 403-601; these read RTLH…ATVT, KELR…EELQ, and KYIQ…KLIS. H22 contributes to the Cu(2+) binding site. Disulfide bonds link C99–C114, C113–C124, C148–C193, C192–C201, C224–C270, C269–C277, C289–C303, and C302–C313. A phosphoserine mark is found at S111, S115, and S117. A glycan (N-linked (GlcNAc...) asparagine) is linked at N251. Residue S344 is modified to Phosphoserine. 7 cysteine pairs are disulfide-bonded: C384–C393, C416–C462, C461–C472, C485–C501, C500–C511, C538–C583, and C582–C591. Position 444 is a phosphoserine (S444).

This sequence belongs to the ALB/AFP/VDB family. Dimeric and trimeric forms have been found in addition to the monomeric form. Sulfated. As to expression, plasma.

The protein resides in the secreted. Binds copper, nickel, and fatty acids as well as, and bilirubin less well than, serum albumin. This is Alpha-fetoprotein (AFP) from Gorilla gorilla gorilla (Western lowland gorilla).